Reading from the N-terminus, the 154-residue chain is Lipoprotein signal peptidase (154 aa).

3 consecutive transmembrane segments (helical) span residues 4-24, 62-82, and 84-104; these read IIIP…KLWI, LFTL…MKHI, and GSYW…GNFI. Active-site residues include Asp-114 and Asp-130. Residues 125 to 145 traverse the membrane as a helical segment; that stretch reads IFNVADSYLTIGIICLMIALW.

Belongs to the peptidase A8 family.

It is found in the cell membrane. The enzyme catalyses Release of signal peptides from bacterial membrane prolipoproteins. Hydrolyzes -Xaa-Yaa-Zaa-|-(S,diacylglyceryl)Cys-, in which Xaa is hydrophobic (preferably Leu), and Yaa (Ala or Ser) and Zaa (Gly or Ala) have small, neutral side chains.. It participates in protein modification; lipoprotein biosynthesis (signal peptide cleavage). Functionally, this protein specifically catalyzes the removal of signal peptides from prolipoproteins. The polypeptide is Lipoprotein signal peptidase (Streptococcus agalactiae serotype V (strain ATCC BAA-611 / 2603 V/R)).